A 1032-amino-acid chain; its full sequence is Unconventional myosin-Ih (1032 aa).

The 690-residue stretch at 12–701 (GVQDFVLLDA…TLFATEDAFE (690 aa)) folds into the Myosin motor domain. 105 to 112 (GESGAGKT) provides a ligand contact to ATP. Position 365 is a phosphoserine (serine 365). The interval 578-600 (LSSLLETLISKEPSYIRCIKPND) is actin-binding. IQ domains are found at residues 704-726 (KHQL…EYVK) and 727-756 (KRQA…AVRI). A TH1 domain is found at 855–1029 (KDGYTESLNQ…NGQLTVVSVR (175 aa)).

Belongs to the TRAFAC class myosin-kinesin ATPase superfamily. Myosin family.

Functionally, myosins are actin-based motor molecules with ATPase activity. Unconventional myosins serve in intracellular movements. Their highly divergent tails are presumed to bind to membranous compartments, which would be moved relative to actin filaments. This Homo sapiens (Human) protein is Unconventional myosin-Ih (MYO1H).